The primary structure comprises 141 residues: Large ribosomal subunit protein uL11 (141 aa).

The protein belongs to the universal ribosomal protein uL11 family. As to quaternary structure, part of the ribosomal stalk of the 50S ribosomal subunit. Interacts with L10 and the large rRNA to form the base of the stalk. L10 forms an elongated spine to which L12 dimers bind in a sequential fashion forming a multimeric L10(L12)X complex. Post-translationally, one or more lysine residues are methylated.

Its function is as follows. Forms part of the ribosomal stalk which helps the ribosome interact with GTP-bound translation factors. The sequence is that of Large ribosomal subunit protein uL11 from Chloroflexus aurantiacus (strain ATCC 29366 / DSM 635 / J-10-fl).